A 1481-amino-acid polypeptide reads, in one-letter code: Cystic fibrosis transmembrane conductance regulator (1481 aa).

The Cytoplasmic portion of the chain corresponds to 1-77; the sequence is MQRSPLEKAS…KLINALRRCF (77 aa). Residues 78-98 traverse the membrane as a helical segment; the sequence is FWRFMFYGIILYLGEVTKAVQ. The 285-residue stretch at 81-365 folds into the ABC transmembrane type-1 1 domain; that stretch reads FMFYGIILYL…WAVQTWYDSL (285 aa). At 99 to 122 the chain is on the extracellular side; that stretch reads PLLLGRIIASYDPDNKVERSIAIY. A helical membrane pass occupies residues 123–146; sequence LGIGLCLLFIVRTLLLHPAIFGLH. Residues 147–195 are Cytoplasmic-facing; it reads HIGMQMRIAMFSLIYKKTLKLSSRVLDKISIGQLVSLLSNNLNKFDEGL. A helical membrane pass occupies residues 196–216; it reads ALAHFVWIAPLQVTLLMGLLW. Topologically, residues 217–222 are extracellular; it reads ELLQAF. Residues 223-243 form a helical membrane-spanning segment; sequence TFCGLAFLVVLAFLQAGLGKM. Residues 244 to 298 lie on the Cytoplasmic side of the membrane; the sequence is MMKYRDQRAGKINERLVITSEIIENIQSVKAYCWEEAMEKIIENLRQTELKLTRK. A helical membrane pass occupies residues 299–319; it reads AAYVRYLNSSAFFFSGFFVVF. Over 320 to 339 the chain is Extracellular; sequence LSVLPYALLKGIILRKIFTT. A helical membrane pass occupies residues 340-358; sequence ISFCIVLRMAVTRQFPWAV. Residues 359–858 lie on the Cytoplasmic side of the membrane; sequence QTWYDSLGAI…YLRYITVHKS (500 aa). ATP contacts are provided by residues tryptophan 401, 457–464, and glutamine 492; that span reads GSTGAGKT. The ABC transporter 1 domain maps to 423-645; sequence NGDNNLFFSN…RPDFSSKLMG (223 aa). Cysteine 523 carries S-palmitoyl cysteine lipidation. Serine 548 and serine 659 each carry phosphoserine. A disordered R region region spans residues 653 to 831; sequence TAERRNSIIT…EEINEEDLRD (179 aa). Position 669 is a phosphoserine; by PKA (serine 669). Serine 685 is modified (phosphoserine). Residue lysine 687 forms a Glycyl lysine isopeptide (Lys-Gly) (interchain with G-Cter in ubiquitin) linkage. 2 positions are modified to phosphoserine: serine 699 and serine 711. The residue at position 716 (threonine 716) is a Phosphothreonine. Serine 736, serine 767, serine 790, serine 795, and serine 813 each carry phosphoserine. Residues 859–879 form a helical membrane-spanning segment; the sequence is LMFVLIWCLVVFLAEVAASLV. Positions 859-1155 constitute an ABC transmembrane type-1 2 domain; sequence LMFVLIWCLV…AVNSSIDVDS (297 aa). The Extracellular segment spans residues 880–918; sequence VLCLFPKILFQDKGNSTKSANNSYAVIITSTSSYYIFYI. 2 N-linked (GlcNAc...) asparagine glycosylation sites follow: asparagine 894 and asparagine 900. The discontinuously helical transmembrane segment at 919–939 threads the bilayer; sequence YVGVADTLLALGLFRGLPLVH. The Cytoplasmic portion of the chain corresponds to 940–990; sequence TLITVSKTLHHKMLQSVLQAPMSTLNTLKTGGILNRFSKDIAVLDDLLPLT. A helical transmembrane segment spans residues 991–1011; that stretch reads IFDFVQLLLIVIGAVVVVSVL. Residues 1012–1013 lie on the Extracellular side of the membrane; that stretch reads QP. A helical membrane pass occupies residues 1014–1034; it reads YIFLATVPVIAAFILLRAYFL. At 1035 to 1095 the chain is on the cytoplasmic side; it reads HTSQQLKQLE…TANWFLYLST (61 aa). Residues 1096–1116 traverse the membrane as a helical segment; it reads LRWFQMRIEMIFVIFFIAVTF. Residues 1117-1130 lie on the Extracellular side of the membrane; that stretch reads ISILTTGEGEGRVG. A helical membrane pass occupies residues 1131 to 1151; it reads IILTLAMNIMGTLQWAVNSSI. Residues 1152 to 1481 lie on the Cytoplasmic side of the membrane; that stretch reads DVDSLMRSVS…TEEEVQETKL (330 aa). One can recognise an ABC transporter 2 domain in the interval 1211-1444; it reads MTVKDLTAKY…KSLFRQAISP (234 aa). ATP-binding positions include tyrosine 1220 and 1245–1252; that span reads GRTGSGKS. Residues 1387 to 1481 are interaction with GORASP2; the sequence is RTLKQAFADC…TEEEVQETKL (95 aa). Cysteine 1396 carries the S-palmitoyl cysteine lipid modification. The disordered stretch occupies residues 1452 to 1481; sequence PQRNSSRQKSRSNIAALKEETEEEVQETKL. Residues 1453-1464 show a composition bias toward low complexity; the sequence is QRNSSRQKSRSN. Phosphoserine is present on serine 1457. The span at 1471-1481 shows a compositional bias: acidic residues; that stretch reads ETEEEVQETKL. The PDZ-binding motif lies at 1479–1481; sequence TKL.

It belongs to the ABC transporter superfamily. ABCC family. CFTR transporter (TC 3.A.1.202) subfamily. As to quaternary structure, monomer; does not require oligomerization for channel activity. May form oligomers in the membrane. Interacts with SLC26A3, SLC26A6 and NHERF1. Interacts with SHANK2. Interacts with MYO6. Interacts (via C-terminus) with GOPC (via PDZ domain); this promotes CFTR internalization and thereby decreases channel activity. Interacts with SLC4A7 through NHERF1. Found in a complex with MYO5B and RAB11A. Interacts with ANO1. Interacts with SLC26A8. Interacts with AHCYL1; the interaction increases CFTR activity. Interacts with CSE1L. The core-glycosylated form interacts with GORASP2 (via PDZ GRASP-type 1 domain) in respone to ER stress. Interacts with MARCHF2; the interaction leads to CFTR ubiqtuitination and degradation. Interacts with ADGRG2. In terms of processing, N-glycosylated. Phosphorylated; cAMP treatment promotes phosphorylation and activates the channel. Dephosphorylation decreases the ATPase activity (in vitro). Phosphorylation at PKA sites activates the channel. Phosphorylation at PKC sites enhances the response to phosphorylation by PKA. Phosphorylated by AMPK; this inhibits channel activity. Post-translationally, ubiquitinated, leading to its degradation in the lysosome. Deubiquitination by USP10 in early endosomes enhances its endocytic recycling to the cell membrane. Ubiquitinated by RNF185 during ER stress. Ubiquitinated by MARCHF2.

The protein resides in the apical cell membrane. The protein localises to the early endosome membrane. It localises to the cell membrane. Its subcellular location is the recycling endosome membrane. It is found in the endoplasmic reticulum membrane. The protein resides in the nucleus. It catalyses the reaction ATP + H2O + closed Cl(-) channel = ADP + phosphate + open Cl(-) channel.. The enzyme catalyses chloride(in) = chloride(out). The catalysed reaction is hydrogencarbonate(in) = hydrogencarbonate(out). It carries out the reaction ATP + H2O = ADP + phosphate + H(+). Its function is as follows. Epithelial ion channel that plays an important role in the regulation of epithelial ion and water transport and fluid homeostasis. Mediates the transport of chloride ions across the cell membrane. Possesses an intrinsic ATPase activity and utilizes ATP to gate its channel; the passive flow of anions through the channel is gated by cycles of ATP binding and hydrolysis by the ATP-binding domains. The ion channel is also permeable to HCO(3)(-); selectivity depends on the extracellular chloride concentration. Exerts its function also by modulating the activity of other ion channels and transporters. Contributes to the regulation of the pH and the ion content of the epithelial fluid layer. Modulates the activity of the epithelial sodium channel (ENaC) complex, in part by regulating the cell surface expression of the ENaC complex. May regulate bicarbonate secretion and salvage in epithelial cells by regulating the transporter SLC4A7. Can inhibit the chloride channel activity of ANO1. Plays a role in the chloride and bicarbonate homeostasis during sperm epididymal maturation and capacitation. This Muntiacus muntjak (Barking deer) protein is Cystic fibrosis transmembrane conductance regulator.